We begin with the raw amino-acid sequence, 1243 residues long: Plasma membrane calcium-transporting ATPase 2 (1243 aa).

The segment covering 1–13 (MGDMTNSDFYSKN) has biased composition (polar residues). The interval 1–24 (MGDMTNSDFYSKNQRNESSHGGEF) is disordered. Topologically, residues 1 to 94 (MGDMTNSDFY…NFIPPKKPKT (94 aa)) are cytoplasmic. Ser-18 carries the post-translational modification Phosphoserine. A helical membrane pass occupies residues 95 to 115 (FLQLVWEALQDVTLIILEIAA). Residues 116–152 (IISLGLSFYHPPGEGNEGCATAQGGAEDEGEAEAGWI) are Extracellular-facing. Residues 153–173 (EGAAILLSVICVVLVTAFNDW) form a helical membrane-spanning segment. Over 174-390 (SKEKQFRGLQ…KEKSVLQGKL (217 aa)) the chain is Cytoplasmic. The segment at 334-381 (GKMQDGNVDASQSKAKQQDGAAAMEMQPLKSAEGGDADDRKKASMHKK) is disordered. A helical transmembrane segment spans residues 391–410 (TKLAVQIGKAGLVMSAITVI). Topologically, residues 411-443 (ILVLYFTVDTFVVNKKPWLPECTPVYVQYFVKF) are extracellular. A helical transmembrane segment spans residues 444–461 (FIIGVTVLVVAVPEGLPL). At 462–875 (AVTISLAYSV…MWGRNVYDSI (414 aa)) the chain is on the cytoplasmic side. Asp-499 (4-aspartylphosphate intermediate) is an active-site residue. Mg(2+)-binding residues include Asp-820 and Asp-824. Residues 876-895 (SKFLQFQLTVNVVAVIVAFT) traverse the membrane as a helical segment. Residues 896 to 905 (GACITQDSPL) lie on the Extracellular side of the membrane. A helical membrane pass occupies residues 906–926 (KAVQMLWVNLIMDTFASLALA). At 927-946 (TEPPTETLLLRKPYGRNKPL) the chain is on the cytoplasmic side. A helical membrane pass occupies residues 947–969 (ISRTMMKNILGHAVYQLALIFTL). Over 970–987 (LFVGEKMFQIDSGRNAPL) the chain is Extracellular. Residues 988–1009 (HSPPSEHYTIIFNTFVMMQLFN) form a helical membrane-spanning segment. At 1010–1028 (EINARKIHGERNVFDGIFR) the chain is on the cytoplasmic side. Residues 1029-1050 (NPIFCTIVLGTFAIQIVIVQFG) form a helical membrane-spanning segment. Residues 1051 to 1060 (GKPFSCSPLQ) lie on the Extracellular side of the membrane. A helical transmembrane segment spans residues 1061–1082 (LDQWMWCIFIGLGELVWGQVIA). The Cytoplasmic segment spans residues 1083-1243 (TIPTSRLKFL…SPIHSLETSL (161 aa)). 3 positions are modified to phosphoserine: Glu-1120, Arg-1132, and Leu-1134. The interval 1123–1140 (LRRGQILWFRGLNRIQTQ) is calmodulin-binding subdomain A. Thr-1139 carries the phosphothreonine; by PKC modification. Residues 1141 to 1150 (IRVVKAFRSS) are calmodulin-binding subdomain B. Phosphoserine is present on residues Ala-1146, Leu-1151, Ser-1163, His-1165, Asp-1177, and Ser-1178. Thr-1188 carries the phosphothreonine modification. A disordered region spans residues 1194-1243 (AALKQNSSPPSSLNKNNSAIDSGINLTTDTSKSATSSSPGSPIHSLETSL). 2 stretches are compositionally biased toward low complexity: residues 1196–1211 (LKQN…KNNS) and 1220–1234 (TTDT…SPGS). Ser-1201 is subject to Phosphoserine; by PKA. Phosphoserine is present on Ser-1211.

This sequence belongs to the cation transport ATPase (P-type) (TC 3.A.3) family. Type IIB subfamily. As to quaternary structure, interacts with PDZD11. Mainly expressed in brain cortex. Found in low levels in skeletal muscle, heart muscle, stomach, liver, kidney and lung. Isoforms containing segment B are found in brain cortex and at low levels in other tissues. Isoforms containing segments X and W are found at low levels in all tissues. Isoforms containing segment A and segment Z are found at low levels in skeletal muscle and heart muscle.

It localises to the cell membrane. It is found in the synapse. The protein resides in the apical cell membrane. The protein localises to the basolateral cell membrane. It carries out the reaction Ca(2+)(in) + ATP + H2O = Ca(2+)(out) + ADP + phosphate + H(+). Up-regulated by calmodulin which increases the affinity of the pump for Ca(2+) ions. Functionally, ATP-driven Ca(2+) ion pump involved in the maintenance of basal intracellular Ca(2+) levels in specialized cells of cerebellar circuit and vestibular and cochlear systems. Uses ATP as an energy source to transport cytosolic Ca(2+) ions across the plasma membrane to the extracellular compartment. Has fast activation and Ca(2+) clearance rate suited to control fast neuronal Ca(2+) dynamics. At parallel fiber to Purkinje neuron synapse, mediates presynaptic Ca(2+) efflux in response to climbing fiber-induced Ca(2+) rise. Provides for fast return of Ca(2+) concentrations back to their resting levels, ultimately contributing to long-term depression induction and motor learning. Plays an essential role in hearing and balance. In cochlear hair cells, shuttles Ca(2+) ions from stereocilia to the endolymph and dissipates Ca(2+) transients generated by the opening of the mechanoelectrical transduction channels. Regulates Ca(2+) levels in the vestibular system, where it contributes to the formation of otoconia. In non-excitable cells, regulates Ca(2+) signaling through spatial control of Ca(2+) ions extrusion and dissipation of Ca(2+) transients generated by store-operated channels. In lactating mammary gland, allows for the high content of Ca(2+) ions in the milk. This is Plasma membrane calcium-transporting ATPase 2 from Homo sapiens (Human).